The primary structure comprises 225 residues: UPF0700 transmembrane protein RA0705 (225 aa).

The next 6 membrane-spanning stretches (helical) occupy residues 17–37 (VGLALVAAISFLAGMTDAIGL), 66–86 (GLLLIGGLVSFVLGNAAGVMI), 95–115 (ALLFVSALLACAALQEGQPEL), 117–137 (FVSLIFAMGAVNASVEQIEGL), 168–188 (IIQIVPWLGMFAGAIMGAVLV), and 194–214 (LALWVPSLAALLLTAAAFQIP).

It belongs to the UPF0700 family.

The protein localises to the cell membrane. The sequence is that of UPF0700 transmembrane protein RA0705 from Rhizobium meliloti (strain 1021) (Ensifer meliloti).